Reading from the N-terminus, the 596-residue chain is Phosphoenolpyruvate carboxykinase [GTP] (596 aa).

Substrate contacts are provided by residues Arg77 and 205 to 207 (YGG). The Mn(2+) site is built by Lys214 and His234. Position 256 (Ser256) interacts with substrate. Residue 257-262 (ACGKTN) participates in GTP binding. Cys258 is a catalytic residue. Asp283 provides a ligand contact to Mn(2+). The interval 362–388 (KKGSTEKAAHPNSRFTAPAKNNPAISP) is disordered. Position 373–375 (373–375 (NSR)) interacts with substrate. Residues Arg375, Arg406, and 499 to 502 (YGDN) each bind GTP.

This sequence belongs to the phosphoenolpyruvate carboxykinase [GTP] family. As to quaternary structure, monomer. Mn(2+) is required as a cofactor.

It localises to the cytoplasm. It catalyses the reaction oxaloacetate + GTP = phosphoenolpyruvate + GDP + CO2. It participates in carbohydrate biosynthesis; gluconeogenesis. Functionally, catalyzes the conversion of oxaloacetate (OAA) to phosphoenolpyruvate (PEP), the rate-limiting step in the metabolic pathway that produces glucose from lactate and other precursors derived from the citric acid cycle. This chain is Phosphoenolpyruvate carboxykinase [GTP], found in Anaeromyxobacter dehalogenans (strain 2CP-C).